The following is a 362-amino-acid chain: Exopolygalacturonase (362 aa).

PbH1 repeat units follow at residues 138–164 (CKNL…HIGR), 165–186 (SDGV…SLGD), 188–208 (SKNI…SVGS), and 218–239 (VVGI…RIKT). Residue Asn140 is glycosylated (N-linked (GlcNAc...) asparagine). Asp179 (proton donor) is an active-site residue. Residues Asn192 and Asn195 are each glycosylated (N-linked (GlcNAc...) asparagine). His202 is a catalytic residue. Residue Asn225 is glycosylated (N-linked (GlcNAc...) asparagine).

Belongs to the glycosyl hydrolase 28 family. In terms of tissue distribution, pollen tubes growing through the style during pollination.

The protein resides in the secreted. It localises to the cell wall. It carries out the reaction [(1-&gt;4)-alpha-D-galacturonosyl](n) + H2O = alpha-D-galacturonate + [(1-&gt;4)-alpha-D-galacturonosyl](n-1). In terms of biological role, may function in depolymerizing pectin during pollen development, germination, and tube growth. Acts as an exo-polygalacturonase. In Oenothera organensis (Evening primrose), this protein is Exopolygalacturonase.